The following is a 200-amino-acid chain: Holliday junction branch migration complex subunit RuvA (200 aa).

Residues 1–64 (MLSYLSGTLI…EDALQLYGFI (64 aa)) are domain I. The interval 65-143 (TTEDREVFKL…KLDLKIDIKE (79 aa)) is domain II. The interval 144–148 (TAFRS) is flexible linker. The tract at residues 149 to 200 (DKQQVRNDAYSALISLGFTKSIAEKAMRAAIAEVPDGSVDDLIRVALRHVQS) is domain III.

The protein belongs to the RuvA family. As to quaternary structure, homotetramer. Forms an RuvA(8)-RuvB(12)-Holliday junction (HJ) complex. HJ DNA is sandwiched between 2 RuvA tetramers; dsDNA enters through RuvA and exits via RuvB. An RuvB hexamer assembles on each DNA strand where it exits the tetramer. Each RuvB hexamer is contacted by two RuvA subunits (via domain III) on 2 adjacent RuvB subunits; this complex drives branch migration. In the full resolvosome a probable DNA-RuvA(4)-RuvB(12)-RuvC(2) complex forms which resolves the HJ.

It localises to the cytoplasm. Functionally, the RuvA-RuvB-RuvC complex processes Holliday junction (HJ) DNA during genetic recombination and DNA repair, while the RuvA-RuvB complex plays an important role in the rescue of blocked DNA replication forks via replication fork reversal (RFR). RuvA specifically binds to HJ cruciform DNA, conferring on it an open structure. The RuvB hexamer acts as an ATP-dependent pump, pulling dsDNA into and through the RuvAB complex. HJ branch migration allows RuvC to scan DNA until it finds its consensus sequence, where it cleaves and resolves the cruciform DNA. The sequence is that of Holliday junction branch migration complex subunit RuvA from Chloroherpeton thalassium (strain ATCC 35110 / GB-78).